The primary structure comprises 167 residues: CS6 fimbrial subunit B (167 aa).

The first 21 residues, methionine 1 to alanine 21, serve as a signal peptide directing secretion.

The protein resides in the fimbrium. The protein is CS6 fimbrial subunit B (cssB) of Escherichia coli.